Consider the following 573-residue polypeptide: Sulfite reductase [NADPH] hemoprotein beta-component (573 aa).

Cys436, Cys442, Cys481, and Cys485 together coordinate [4Fe-4S] cluster. Siroheme is bound at residue Cys485.

This sequence belongs to the nitrite and sulfite reductase 4Fe-4S domain family. Alpha(8)-beta(8). The alpha component is a flavoprotein, the beta component is a hemoprotein. Requires siroheme as cofactor. [4Fe-4S] cluster serves as cofactor.

The catalysed reaction is hydrogen sulfide + 3 NADP(+) + 3 H2O = sulfite + 3 NADPH + 4 H(+). It participates in sulfur metabolism; hydrogen sulfide biosynthesis; hydrogen sulfide from sulfite (NADPH route): step 1/1. Functionally, component of the sulfite reductase complex that catalyzes the 6-electron reduction of sulfite to sulfide. This is one of several activities required for the biosynthesis of L-cysteine from sulfate. This chain is Sulfite reductase [NADPH] hemoprotein beta-component, found in Alteromonas mediterranea (strain DSM 17117 / CIP 110805 / LMG 28347 / Deep ecotype).